Reading from the N-terminus, the 986-residue chain is Probable serine/threonine-protein kinase DDB_G0272092 (986 aa).

In terms of domain architecture, C2 spans 1–107 (MARKIGSVRI…EYIVDTTKWY (107 aa)). Aspartate 22, aspartate 28, aspartate 76, aspartate 78, serine 81, and aspartate 84 together coordinate Ca(2+). 6 ANK repeats span residues 137-167 (PEKSPFIKAIKDNDTQAIELMMNKAKLDYTI), 171-201 (EGTPAIHIAAASNNIPLITMLLKGSDARVSI), 205-238 (HGNTPLHLFVQKNVSLNCEDIINKLIERGCGIND), 242-274 (LGETALHKACLATVVQKTTIVEQLLQKGAIINH), 278-307 (TRDTPLHYAIKVGKVEFVRFFLQNGANVMI), and 312-344 (PSRTPLELAKELGNPQIISKVEKVIEISDWLNE). The 64-residue stretch at 333 to 396 (EKVIEISDWL…LRAVRKIKDP (64 aa)) folds into the SAM domain. Residues 412–438 (HVENDNNNNNNNNNNNNNSQEQCNINN) show a composition bias toward low complexity. Disordered regions lie at residues 412–520 (HVEN…SNTT) and 532–574 (TTLT…PEGP). A compositionally biased stretch (polar residues) spans 439-448 (DSLGSGNRNS). Positions 454 to 464 (QNQNNTLNNNN) are enriched in low complexity. Over residues 465 to 476 (VESKSTGNLNSL) the composition is skewed to polar residues. 2 stretches are compositionally biased toward low complexity: residues 493-520 (NILSPNPIPASSSAPAAPSPVAIGSNTT) and 546-571 (TESTTPPQQQQQTTTITPTKTTTVTP). In terms of domain architecture, Protein kinase spans 601 to 870 (LTYNVLLGTG…ELLKIRDEYN (270 aa)). ATP contacts are provided by residues 607–615 (LGTGASGKV) and lysine 628. Aspartate 722 (proton acceptor) is an active-site residue. Low complexity-rich tracts occupy residues 901–913 (DSNNINNNNNNNN) and 928–947 (SNSNLLNNNNNNNNNDSDNN). Residues 901–986 (DSNNINNNNN…SPMEPKSIKK (86 aa)) are disordered. Polar residues-rich tracts occupy residues 948 to 959 (ISEPATTDSITK) and 969 to 978 (LTRTRSSSSP).

It belongs to the protein kinase superfamily. TKL Ser/Thr protein kinase family. Ca(2+) is required as a cofactor.

The catalysed reaction is L-seryl-[protein] + ATP = O-phospho-L-seryl-[protein] + ADP + H(+). It carries out the reaction L-threonyl-[protein] + ATP = O-phospho-L-threonyl-[protein] + ADP + H(+). The chain is Probable serine/threonine-protein kinase DDB_G0272092 from Dictyostelium discoideum (Social amoeba).